Consider the following 142-residue polypeptide: Coactosin-like protein (142 aa).

Alanine 2 carries the post-translational modification N-acetylalanine. The ADF-H domain maps to 2-130; sequence ATKIDKEACR…EEDFIRSELK (129 aa). Serine 23 is subject to Phosphoserine. The flexible and important for F-actin binding stretch occupies residues 66-75; sequence TGDAMSKRSK. Lysine 102 carries the N6-acetyllysine modification. Serine 141 bears the Phosphoserine mark.

This sequence belongs to the actin-binding proteins ADF family. Coactosin subfamily. Interacts with 5-lipoxygenase (ALOX5/5LO) in a calcium-independent manner. Binds to F-actin with a stoichiometry of 1:2.

It localises to the cytoplasm. The protein localises to the cytoskeleton. It is found in the nucleus. Binds to F-actin in a calcium-independent manner. Has no direct effect on actin depolymerization. Acts as a chaperone for ALOX5 (5LO), influencing both its stability and activity in leukotrienes synthesis. This is Coactosin-like protein from Rattus norvegicus (Rat).